Consider the following 492-residue polypeptide: ATP synthase subunit beta, plastid (492 aa).

170–177 (GGAGVGKT) lines the ATP pocket.

It belongs to the ATPase alpha/beta chains family. In terms of assembly, F-type ATPases have 2 components, CF(1) - the catalytic core - and CF(0) - the membrane proton channel. CF(1) has five subunits: alpha(3), beta(3), gamma(1), delta(1), epsilon(1). CF(0) has four main subunits: a(1), b(1), b'(1) and c(9-12).

Its subcellular location is the plastid membrane. The enzyme catalyses ATP + H2O + 4 H(+)(in) = ADP + phosphate + 5 H(+)(out). Produces ATP from ADP in the presence of a proton gradient across the membrane. The catalytic sites are hosted primarily by the beta subunits. The polypeptide is ATP synthase subunit beta, plastid (Aneura mirabilis (Parasitic liverwort)).